The primary structure comprises 593 residues: CTD kinase subunit alpha (593 aa).

2 stretches are compositionally biased toward polar residues: residues 1 to 17 (MSYS…TEPN) and 29 to 51 (QLSG…FKNN). Positions 1–262 (MSYSKSTIYR…ESVPAPLPSP (262 aa)) are disordered. Residues S56 and S58 each carry the phosphoserine modification. The span at 90–103 (RSRKSRRRKGKKAF) shows a compositional bias: basic residues. Phosphoserine is present on residues S104 and S109. Low complexity predominate over residues 139-152 (SSSSASVSPISPSA). Positions 160–170 (QASSFRRSPPS) are enriched in polar residues. A compositionally biased stretch (low complexity) spans 198 to 215 (IPHETTSSDTQKKSSVSS). In terms of domain architecture, Protein kinase spans 277-561 (YEKIDQIGEG…AHETLMHEYF (285 aa)). Residues 283 to 291 (IGEGTYGKV) and K306 contribute to the ATP site. The Proton acceptor role is filled by D399.

It belongs to the protein kinase superfamily. CMGC Ser/Thr protein kinase family. CDC2/CDKX subfamily. In terms of assembly, CTDK-I consists of three subunits, ctk1/lsk1, ctk2/lsc1 and ctk3 (also called alpha, beta and gamma). Interacts with ctk2/lsc1. This interaction is dependent on kinase activity.

It localises to the nucleus. The protein resides in the nucleolus. The catalysed reaction is [DNA-directed RNA polymerase] + ATP = phospho-[DNA-directed RNA polymerase] + ADP + H(+). Catalytic subunit of the CTDK-I complex, which hyperphosphorylates the C-terminal heptapeptide repeat domain (CTD) of the largest RNA polymerase II subunit. Involved in RNA polymerase II transcriptional elongation and pre-mRNA 3'-end processing. Together with ctk2/lsc1, required for the regulation of cytokinesis by phosphorylating 'Ser-2' residues found in the heptad repeats of the CTD. Required for nuclear localization of ctk2/lsc1. Positively regulates the septation initiation network (SIN) and promotes successful completion of cytokinesis in response to perturbation of the actomyosin ring. Acts in parallel to clp1 to promote actomyosin ring stability upon cytokinesis checkpoint activation. This Schizosaccharomyces pombe (strain 972 / ATCC 24843) (Fission yeast) protein is CTD kinase subunit alpha.